Reading from the N-terminus, the 699-residue chain is Polyribonucleotide nucleotidyltransferase (699 aa).

Mg(2+)-binding residues include D488 and D494. A KH domain is found at 555 to 614 (PRIYSIKVNPDKIKDVIGKGGSVIRSLTEETNTIIDIEDNGIIKIVALDYDKAKQAIRRI). The 69-residue stretch at 624 to 692 (GAVYTGKVSH…RQGRIRLSMK (69 aa)) folds into the S1 motif domain.

Belongs to the polyribonucleotide nucleotidyltransferase family. In terms of assembly, component of the RNA degradosome, which is a multiprotein complex involved in RNA processing and mRNA degradation. The cofactor is Mg(2+).

The protein resides in the cytoplasm. The enzyme catalyses RNA(n+1) + phosphate = RNA(n) + a ribonucleoside 5'-diphosphate. In terms of biological role, involved in mRNA degradation. Catalyzes the phosphorolysis of single-stranded polyribonucleotides processively in the 3'- to 5'-direction. In Blochmanniella pennsylvanica (strain BPEN), this protein is Polyribonucleotide nucleotidyltransferase.